A 221-amino-acid polypeptide reads, in one-letter code: Translation initiation factor 6 (221 aa).

Belongs to the eIF-6 family.

In terms of biological role, binds to the 50S ribosomal subunit and prevents its association with the 30S ribosomal subunit to form the 70S initiation complex. This chain is Translation initiation factor 6, found in Methanopyrus kandleri (strain AV19 / DSM 6324 / JCM 9639 / NBRC 100938).